The sequence spans 227 residues: Urease accessory protein UreE (227 aa).

Residues 192–227 (PHGSGLHVHAIHSHGHSHSHDHDHDHNHDHDHKHKQ) form a disordered region. Basic and acidic residues predominate over residues 209-221 (HSHDHDHDHNHDH).

Belongs to the UreE family.

It is found in the cytoplasm. In terms of biological role, involved in urease metallocenter assembly. Binds nickel. Probably functions as a nickel donor during metallocenter assembly. In Yersinia bercovieri, this protein is Urease accessory protein UreE.